We begin with the raw amino-acid sequence, 1452 residues long: Receptor-type tyrosine-protein phosphatase mu (1452 aa).

The N-terminal stretch at 1–20 is a signal peptide; that stretch reads MRTLGTCLVTLAGLLLTAAG. Residues 21–742 are Extracellular-facing; the sequence is ETFSGGCLFD…PEKQTDHTVK (722 aa). In terms of domain architecture, MAM spans 22–184; sequence TFSGGCLFDE…VKVLGHPCTR (163 aa). The cysteines at positions 27 and 36 are disulfide-linked. N-linked (GlcNAc...) asparagine glycans are attached at residues Asn-72, Asn-92, Asn-131, and Asn-249. 2 cysteine pairs are disulfide-bonded: Cys-96/Cys-182 and Cys-206/Cys-260. Positions 186–277 constitute an Ig-like C2-type domain; sequence PHFLRIQNVE…VGISNYAELV (92 aa). Fibronectin type-III domains are found at residues 284 to 379, 382 to 480, 481 to 587, and 589 to 671; these read PIAP…CADP, GPRK…TDED, LPGA…SAPS, and PAYE…DSLQ. Residues Asn-406, Asn-414, Asn-454, Asn-534, Asn-544, Asn-598, Asn-651, and Asn-681 are each glycosylated (N-linked (GlcNAc...) asparagine). Residues 743-764 traverse the membrane as a helical segment; it reads IAGVIAGILLFVIIFLGVVLVM. At 765-1452 the chain is on the cytoplasmic side; that stretch reads KKRKLAKKRK…EVALEYLNSG (688 aa). Residue Ser-821 is modified to Phosphoserine. 2 consecutive Tyrosine-protein phosphatase domains span residues 900–1154 and 1186–1448; these read FKEE…ILEA and IKEE…ALEY. Substrate-binding positions include Asp-1063, 1095-1101, and Gln-1139; that span reads CSAGAGR. Residue Cys-1095 is the Phosphocysteine intermediate of the active site. The active-site Phosphocysteine intermediate is the Cys-1389.

It belongs to the protein-tyrosine phosphatase family. Receptor class 2B subfamily. As to quaternary structure, homodimer. As to expression, most abundant in lung, less in brain and heart.

It is found in the cell membrane. The enzyme catalyses O-phospho-L-tyrosyl-[protein] + H2O = L-tyrosyl-[protein] + phosphate. Its function is as follows. Receptor protein-tyrosine phosphatase that mediates homotypic cell-cell interactions and plays a role in adipogenic differentiation via modulation of p120 catenin/CTNND1 phosphorylation. Promotes CTNND1 dephosphorylation and prevents its cytoplasmic localization where it inhibits SLC2A4 membrane trafficking. In turn, SLC2A4 is directed to the plasma membrane and performs its glucose transporter function. In Mus musculus (Mouse), this protein is Receptor-type tyrosine-protein phosphatase mu (Ptprm).